We begin with the raw amino-acid sequence, 688 residues long: Probable glucan endo-1,3-beta-glucosidase btgC (688 aa).

Disordered stretches follow at residues 1–91 (MSGP…NLGP), 126–148 (ANIP…PEPP), and 168–195 (GQLT…IPYQ). The Cytoplasmic segment spans residues 1–307 (MSGPNRTYSF…PKPGGGNKKR (307 aa)). A compositionally biased stretch (polar residues) spans 175–188 (SVSHLSSTNPSQRN). The helical; Signal-anchor for type II membrane protein transmembrane segment at 308 to 328 (GWIVGAILAFIIIGAIVGGAV) threads the bilayer. Residues 329–688 (GGTIGHRGNE…IPDCGGKTAT (360 aa)) lie on the Extracellular side of the membrane. A disordered region spans residues 334 to 363 (HRGNEEPSSASSASSSSTQTATEDTSVNGD). The segment covering 341–355 (SSASSASSSSTQTAT) has biased composition (low complexity). Asparagine 408, asparagine 431, and asparagine 459 each carry an N-linked (GlcNAc...) asparagine glycan. Glutamate 491 serves as the catalytic Proton donor. Glutamate 590 acts as the Nucleophile in catalysis. N-linked (GlcNAc...) asparagine glycosylation is found at asparagine 609 and asparagine 635.

The protein belongs to the glycosyl hydrolase 17 family.

The protein resides in the cell membrane. It catalyses the reaction Hydrolysis of (1-&gt;3)-beta-D-glucosidic linkages in (1-&gt;3)-beta-D-glucans.. Its function is as follows. Glucanases play a role in cell expansion during growth, in cell-cell fusion during mating, and in spore release during sporulation. This enzyme may be involved in beta-glucan degradation. Active on laminarin and lichenan. The chain is Probable glucan endo-1,3-beta-glucosidase btgC (btgC) from Aspergillus fumigatus (strain ATCC MYA-4609 / CBS 101355 / FGSC A1100 / Af293) (Neosartorya fumigata).